The chain runs to 76 residues: uncharacterized protein (76 aa).

Residues 36 to 41 are required for interaction with PPP3CA; it reads PDIIIT. A phosphothreonine mark is found at Thr44 and Thr46.

In terms of assembly, interacts (via PxIxIT motif, when phosphorylated on Thr-44) with PPP3CA. Not expressed in pancreatic duct cells (at protein level). Abundantly expressed in the pancreas and weakly expressed in the thyroid. In terms of tissue distribution, not expressed in pancreatic duct cells (at protein level). Abundantly expressed in the lymph node and weakly expressed in the stomach, trachea and bone marrow.

This is an uncharacterized protein from Homo sapiens (Human).